Here is a 501-residue protein sequence, read N- to C-terminus: L-arabinose isomerase (501 aa).

Mn(2+)-binding residues include Glu306, Glu333, His350, and His449.

It belongs to the arabinose isomerase family. Mn(2+) is required as a cofactor.

It carries out the reaction beta-L-arabinopyranose = L-ribulose. It functions in the pathway carbohydrate degradation; L-arabinose degradation via L-ribulose; D-xylulose 5-phosphate from L-arabinose (bacterial route): step 1/3. In terms of biological role, catalyzes the conversion of L-arabinose to L-ribulose. This is L-arabinose isomerase from Herpetosiphon aurantiacus (strain ATCC 23779 / DSM 785 / 114-95).